The chain runs to 84 residues: CDC42 small effector protein 2 (84 aa).

2 S-palmitoyl cysteine lipidation sites follow: cysteine 10 and cysteine 11. Residues 29–42 form the CRIB domain; that stretch reads IGEPTNFVHTAHVG. Phosphoserine occurs at positions 43 and 52.

Belongs to the CDC42SE/SPEC family. As to quaternary structure, interacts with CDC42 (in GTP-bound form). Interacts weakly with RAC1 and not at all with RHOA.

Its subcellular location is the cytoplasm. It is found in the cytoskeleton. It localises to the cell membrane. The protein localises to the cell projection. The protein resides in the phagocytic cup. Functionally, probably involved in the organization of the actin cytoskeleton by acting downstream of CDC42, inducing actin filament assembly. Alters CDC42-induced cell shape changes. In activated T-cells, may play a role in CDC42-mediated F-actin accumulation at the immunological synapse. May play a role in early contractile events in phagocytosis in macrophages. The chain is CDC42 small effector protein 2 (CDC42SE2) from Bos taurus (Bovine).